Reading from the N-terminus, the 188-residue chain is dCTP deaminase (188 aa).

DCTP-binding positions include 111-116, 135-137, Gln156, Tyr170, and Gln180; these read KSTYAR and TLE. Glu137 (proton donor/acceptor) is an active-site residue.

Belongs to the dCTP deaminase family. Homotrimer.

The catalysed reaction is dCTP + H2O + H(+) = dUTP + NH4(+). Its pathway is pyrimidine metabolism; dUMP biosynthesis; dUMP from dCTP (dUTP route): step 1/2. Catalyzes the deamination of dCTP to dUTP. In Dechloromonas aromatica (strain RCB), this protein is dCTP deaminase.